A 289-amino-acid chain; its full sequence is 4-diphosphocytidyl-2-C-methyl-D-erythritol kinase (289 aa).

Residue lysine 10 is part of the active site. ATP is bound at residue 94-104 (PVAAGLAGGSS). Aspartate 136 is a catalytic residue.

The protein belongs to the GHMP kinase family. IspE subfamily.

The catalysed reaction is 4-CDP-2-C-methyl-D-erythritol + ATP = 4-CDP-2-C-methyl-D-erythritol 2-phosphate + ADP + H(+). The protein operates within isoprenoid biosynthesis; isopentenyl diphosphate biosynthesis via DXP pathway; isopentenyl diphosphate from 1-deoxy-D-xylulose 5-phosphate: step 3/6. In terms of biological role, catalyzes the phosphorylation of the position 2 hydroxy group of 4-diphosphocytidyl-2C-methyl-D-erythritol. The chain is 4-diphosphocytidyl-2-C-methyl-D-erythritol kinase from Bacillus licheniformis (strain ATCC 14580 / DSM 13 / JCM 2505 / CCUG 7422 / NBRC 12200 / NCIMB 9375 / NCTC 10341 / NRRL NRS-1264 / Gibson 46).